The following is a 395-amino-acid chain: Dihydrolipoyllysine-residue succinyltransferase component of 2-oxoglutarate dehydrogenase complex (395 aa).

In terms of domain architecture, Lipoyl-binding spans 2-77 (RVKIIVPSLG…AVGEEIGEIN (76 aa)). Lysine 43 carries the post-translational modification N6-lipoyllysine. One can recognise a Peripheral subunit-binding (PSBD) domain in the interval 111-148 (TLAPSVQKLVTENKLDPNNIKGTGRDGRITKGDVLATI). Active-site residues include histidine 366 and aspartate 370.

It belongs to the 2-oxoacid dehydrogenase family. In terms of assembly, forms a 24-polypeptide structural core with octahedral symmetry. Part of the 2-oxoglutarate dehydrogenase (OGDH) complex composed of E1 (2-oxoglutarate dehydrogenase), E2 (dihydrolipoamide succinyltransferase) and E3 (dihydrolipoamide dehydrogenase); the complex contains multiple copies of the three enzymatic components (E1, E2 and E3). It depends on (R)-lipoate as a cofactor.

The catalysed reaction is N(6)-[(R)-dihydrolipoyl]-L-lysyl-[protein] + succinyl-CoA = N(6)-[(R)-S(8)-succinyldihydrolipoyl]-L-lysyl-[protein] + CoA. It participates in amino-acid degradation; L-lysine degradation via saccharopine pathway; glutaryl-CoA from L-lysine: step 6/6. In terms of biological role, E2 component of the 2-oxoglutarate dehydrogenase (OGDH) complex which catalyzes the second step in the conversion of 2-oxoglutarate to succinyl-CoA and CO(2). The sequence is that of Dihydrolipoyllysine-residue succinyltransferase component of 2-oxoglutarate dehydrogenase complex (sucB) from Rickettsia conorii (strain ATCC VR-613 / Malish 7).